We begin with the raw amino-acid sequence, 242 residues long: MVTILSTPLSPRLTFLCETKLSLSRSNRSVCCSLSEEPKDQCLSRRSLVYVLVASPCLLLPALSSSAKTKSKSPYDERRLLEQNKRIQRENNAPDEFPNFVREGFEVKVLASDNYIKADSGLIYRDFNVGQGDFPKDGQQVTFHYIGYNESGRRIDSTYIQGSPARIRMGTNALVPGFEMGIRDMKPGGRRRIIIPPELGPPVGPSTFFSSKQFEVFDVELLSIQNCERRTIIGFYSDVTCS.

Residues methionine 1–cysteine 31 constitute a chloroplast transit peptide. The N-terminal 36 residues, cysteine 32–alanine 67, are a transit peptide targeting the thylakoid. One can recognise a PPIase FKBP-type domain in the interval glycine 138–glutamine 225. A disulfide bond links cysteine 227 and cysteine 241.

The protein belongs to the FKBP-type PPIase family. As to quaternary structure, interacts in vitro with LTO1.

It localises to the plastid. The protein resides in the chloroplast thylakoid lumen. It carries out the reaction [protein]-peptidylproline (omega=180) = [protein]-peptidylproline (omega=0). PPIases accelerate the folding of proteins. It catalyzes the cis-trans isomerization of proline imidic peptide bonds in oligopeptides. Involved in the accumulation of the PSII complex. The polypeptide is Peptidyl-prolyl cis-trans isomerase FKBP20-2, chloroplastic (Arabidopsis thaliana (Mouse-ear cress)).